The chain runs to 308 residues: Porphobilinogen deaminase (308 aa).

Position 241 is an S-(dipyrrolylmethanemethyl)cysteine (Cys241).

The protein belongs to the HMBS family. In terms of assembly, monomer. It depends on dipyrromethane as a cofactor.

The enzyme catalyses 4 porphobilinogen + H2O = hydroxymethylbilane + 4 NH4(+). The protein operates within porphyrin-containing compound metabolism; protoporphyrin-IX biosynthesis; coproporphyrinogen-III from 5-aminolevulinate: step 2/4. Its function is as follows. Tetrapolymerization of the monopyrrole PBG into the hydroxymethylbilane pre-uroporphyrinogen in several discrete steps. The polypeptide is Porphobilinogen deaminase (Staphylococcus epidermidis (strain ATCC 35984 / DSM 28319 / BCRC 17069 / CCUG 31568 / BM 3577 / RP62A)).